Here is a 670-residue protein sequence, read N- to C-terminus: Solute carrier organic anion transporter family member 1A6 (670 aa).

Topologically, residues 1-20 (MGEPGKRVGIHRVRCFAKIK) are cytoplasmic. Residues 21-40 (VFLLALIWAYISKILSGVYM) form a helical membrane-spanning segment. The Extracellular portion of the chain corresponds to 41 to 59 (STMLTQLERQFNISTSIVG). The N-linked (GlcNAc...) asparagine glycan is linked to asparagine 52. The helical transmembrane segment at 60 to 80 (LINGSFEMGNLLVIVFVSYFG) threads the bilayer. Over 81–86 (TKLHRP) the chain is Cytoplasmic. A helical membrane pass occupies residues 87-111 (IMIGVGCAVMGLGCFIISLPHFLMG). Topologically, residues 112 to 155 (RYEYETTISPTSNLSSNSFLCVENRSQTLKPTQDPAECVKEIKS) are extracellular. Residues asparagine 124 and asparagine 135 are each glycosylated (N-linked (GlcNAc...) asparagine). A helical membrane pass occupies residues 156 to 184 (LMWIYVLVGNIIRGIGETPIMPLGISYIE). Residues 185–203 (DFAKSENSPLYIGILEVGK) lie on the Cytoplasmic side of the membrane. A helical transmembrane segment spans residues 204–224 (MIGPILGYLMGPFCANIYVDT). Residues 225 to 242 (GSVNTDDLTITPTDTRWV) are Extracellular-facing. The helical transmembrane segment at 243–267 (GAWWIGFLVCAGVNVLTSIPFFFFP) threads the bilayer. Over 268-311 (KTLPKEGLQDNGDGTENAKEEKHRDKAKEENQGIIKEFFLMMKN) the chain is Cytoplasmic. A helical membrane pass occupies residues 312 to 333 (LFCNPIYMLCVLTSVLQVNGVA). The Extracellular segment spans residues 334–353 (NIVIYKPKYLEHHFGISTAK). The chain crosses the membrane as a helical span at residues 354-377 (AVFLIGLYTTPSVSAGYLISGFIM). The Cytoplasmic portion of the chain corresponds to 378–381 (KKLK). Residues 382–405 (ITLKKAAIIALCLFMSECLLSLCN) traverse the membrane as a helical segment. Residues 406-513 (FMLTCDTTPI…PDCANKLQYF (108 aa)) lie on the Extracellular side of the membrane. The Kazal-like domain maps to 433-488 (NKFLSDCNTRCNCLTKTWDPVCGNNGLAYMSPCLAGCEKSVGTGANMVFQNCSCIR). 3 cysteine pairs are disulfide-bonded: cysteine 439–cysteine 469, cysteine 445–cysteine 465, and cysteine 454–cysteine 486. Asparagine 483 and asparagine 492 each carry an N-linked (GlcNAc...) asparagine glycan. A helical transmembrane segment spans residues 514–536 (LIITVFCCFFYSLATIPGYMVFL). Residues 537 to 545 (RCMKSEEKS) lie on the Cytoplasmic side of the membrane. A helical transmembrane segment spans residues 546 to 571 (LGIGLQAFFMRLFAGIPAPIYFGALI). The Extracellular portion of the chain corresponds to 572–605 (DRTCLHWGTLKCGEPGACRTYEVSSFRRLYLGLP). A helical transmembrane segment spans residues 606–623 (AALRGSIILPSFFILRLI). At 624-670 (RKLQIPGDTDSSEIELAETKPTEKESECTDMHKSSKVENDGELKTKL) the chain is on the cytoplasmic side. Threonine 632 is subject to Phosphothreonine. Residues 633–670 (DSSEIELAETKPTEKESECTDMHKSSKVENDGELKTKL) form a disordered region. Serine 634 and serine 635 each carry phosphoserine. Positions 640 to 670 (AETKPTEKESECTDMHKSSKVENDGELKTKL) are enriched in basic and acidic residues.

The protein belongs to the organo anion transporter (TC 2.A.60) family. As to expression, kidney specific.

It localises to the cell membrane. Functionally, may mediate the Na(+)-independent transport of organic anions. The protein is Solute carrier organic anion transporter family member 1A6 (Slco1a6) of Mus musculus (Mouse).